Consider the following 364-residue polypeptide: tRNA/tmRNA (uracil-C(5))-methyltransferase (364 aa).

S-adenosyl-L-methionine-binding residues include Q186, Y214, N219, E235, and D295. C320 serves as the catalytic Nucleophile. Catalysis depends on E354, which acts as the Proton acceptor.

The protein belongs to the class I-like SAM-binding methyltransferase superfamily. RNA M5U methyltransferase family. TrmA subfamily.

The enzyme catalyses uridine(54) in tRNA + S-adenosyl-L-methionine = 5-methyluridine(54) in tRNA + S-adenosyl-L-homocysteine + H(+). It carries out the reaction uridine(341) in tmRNA + S-adenosyl-L-methionine = 5-methyluridine(341) in tmRNA + S-adenosyl-L-homocysteine + H(+). In terms of biological role, dual-specificity methyltransferase that catalyzes the formation of 5-methyluridine at position 54 (m5U54) in all tRNAs, and that of position 341 (m5U341) in tmRNA (transfer-mRNA). This Azoarcus sp. (strain BH72) protein is tRNA/tmRNA (uracil-C(5))-methyltransferase.